Here is a 347-residue protein sequence, read N- to C-terminus: N-acetyl-gamma-glutamyl-phosphate reductase (347 aa).

C152 is a catalytic residue.

Belongs to the NAGSA dehydrogenase family. Type 1 subfamily.

Its subcellular location is the cytoplasm. It catalyses the reaction N-acetyl-L-glutamate 5-semialdehyde + phosphate + NADP(+) = N-acetyl-L-glutamyl 5-phosphate + NADPH + H(+). Its pathway is amino-acid biosynthesis; L-arginine biosynthesis; N(2)-acetyl-L-ornithine from L-glutamate: step 3/4. Catalyzes the NADPH-dependent reduction of N-acetyl-5-glutamyl phosphate to yield N-acetyl-L-glutamate 5-semialdehyde. The chain is N-acetyl-gamma-glutamyl-phosphate reductase from Neisseria meningitidis serogroup C (strain 053442).